A 321-amino-acid polypeptide reads, in one-letter code: Ribose-phosphate pyrophosphokinase (321 aa).

ATP-binding positions include 44–46 and 103–104; these read DGE and RQ. The Mg(2+) site is built by H137 and D179. K202 is an active-site residue. Residues R204, D228, and 232-236 each bind D-ribose 5-phosphate; that span reads DTAGT.

The protein belongs to the ribose-phosphate pyrophosphokinase family. Class I subfamily. In terms of assembly, homohexamer. It depends on Mg(2+) as a cofactor.

Its subcellular location is the cytoplasm. It catalyses the reaction D-ribose 5-phosphate + ATP = 5-phospho-alpha-D-ribose 1-diphosphate + AMP + H(+). The protein operates within metabolic intermediate biosynthesis; 5-phospho-alpha-D-ribose 1-diphosphate biosynthesis; 5-phospho-alpha-D-ribose 1-diphosphate from D-ribose 5-phosphate (route I): step 1/1. Functionally, involved in the biosynthesis of the central metabolite phospho-alpha-D-ribosyl-1-pyrophosphate (PRPP) via the transfer of pyrophosphoryl group from ATP to 1-hydroxyl of ribose-5-phosphate (Rib-5-P). This is Ribose-phosphate pyrophosphokinase from Staphylococcus haemolyticus (strain JCSC1435).